Here is a 1040-residue protein sequence, read N- to C-terminus: Multidrug resistance protein MdtB (1040 aa).

The next 12 membrane-spanning stretches (helical) occupy residues Leu-25–Ala-45, Leu-347–Ala-367, Ile-369–Leu-389, Leu-396–Ile-416, Ile-440–Phe-460, Phe-472–Pro-492, Trp-537–Ile-557, Leu-863–Val-883, Phe-888–Ala-908, Ile-910–Ile-930, Ile-968–Val-988, and Ile-998–Ile-1018.

The protein belongs to the resistance-nodulation-cell division (RND) (TC 2.A.6) family. MdtB subfamily. In terms of assembly, part of a tripartite efflux system composed of MdtA, MdtB and MdtC. MdtB forms a heteromultimer with MdtC.

It is found in the cell inner membrane. The chain is Multidrug resistance protein MdtB from Salmonella newport (strain SL254).